Consider the following 421-residue polypeptide: Gamma-glutamyl phosphate reductase (421 aa).

This sequence belongs to the gamma-glutamyl phosphate reductase family.

It is found in the cytoplasm. The enzyme catalyses L-glutamate 5-semialdehyde + phosphate + NADP(+) = L-glutamyl 5-phosphate + NADPH + H(+). It participates in amino-acid biosynthesis; L-proline biosynthesis; L-glutamate 5-semialdehyde from L-glutamate: step 2/2. Functionally, catalyzes the NADPH-dependent reduction of L-glutamate 5-phosphate into L-glutamate 5-semialdehyde and phosphate. The product spontaneously undergoes cyclization to form 1-pyrroline-5-carboxylate. This is Gamma-glutamyl phosphate reductase from Stutzerimonas stutzeri (strain A1501) (Pseudomonas stutzeri).